We begin with the raw amino-acid sequence, 411 residues long: DNA polymerase IV (411 aa).

In terms of domain architecture, UmuC spans 18 to 211; sequence VVHVDMDCFY…LDVADLHGVG (194 aa). Mg(2+)-binding residues include Asp-22 and Asp-130. The active site involves Glu-131. 2 disordered regions span residues 248–280 and 376–411; these read FHRR…GATE and GFSG…DEFT. A compositionally biased stretch (basic and acidic residues) spans 253–274; sequence RGADSRPVEPRGKPKSLSRESS. A compositionally biased stretch (gly residues) spans 384-402; that stretch reads DGGGHEGGACGGAGRGSCG.

The protein belongs to the DNA polymerase type-Y family. As to quaternary structure, monomer. Mg(2+) serves as cofactor.

The protein localises to the cytoplasm. The enzyme catalyses DNA(n) + a 2'-deoxyribonucleoside 5'-triphosphate = DNA(n+1) + diphosphate. In terms of biological role, poorly processive, error-prone DNA polymerase involved in untargeted mutagenesis. Copies undamaged DNA at stalled replication forks, which arise in vivo from mismatched or misaligned primer ends. These misaligned primers can be extended by PolIV. Exhibits no 3'-5' exonuclease (proofreading) activity. May be involved in translesional synthesis. This chain is DNA polymerase IV, found in Halobacterium salinarum (strain ATCC 29341 / DSM 671 / R1).